The chain runs to 273 residues: Rhamnulose-1-phosphate aldolase (273 aa).

E117 is an active-site residue. Residues H140, H142, and H211 each coordinate Zn(2+).

Belongs to the aldolase class II family. RhaD subfamily. Requires Zn(2+) as cofactor.

It is found in the cytoplasm. The enzyme catalyses L-rhamnulose 1-phosphate = (S)-lactaldehyde + dihydroxyacetone phosphate. The protein operates within carbohydrate degradation; L-rhamnose degradation; glycerone phosphate from L-rhamnose: step 3/3. Functionally, catalyzes the reversible cleavage of L-rhamnulose-1-phosphate to dihydroxyacetone phosphate (DHAP) and L-lactaldehyde. This Listeria monocytogenes serovar 1/2a (strain ATCC BAA-679 / EGD-e) protein is Rhamnulose-1-phosphate aldolase.